The sequence spans 244 residues: MGRAFEYRRASKEARWGKMSKLFPKLGKSITMAAKEGGPDPDMNPKLRTAIATAKAQNMPKDNIDAAIKRASGKDAADIKIIHYDGKAPHGALLIIECASDNSTRTVANIKSILNKGNGEFLPNGSLTFMFSRKSVFEVEYPKRDLEAVELDLIDYGLTEMEENEFENDKGEIEKTLTIYGDYESFGTLNEGIEKLGLTIKSGNLQFVANNFVEFADEDLKEIEELIEKLEDDDDVQAVYTNIK.

Belongs to the TACO1 family.

It is found in the cytoplasm. This chain is Probable transcriptional regulatory protein CHAB381_1426, found in Campylobacter hominis (strain ATCC BAA-381 / DSM 21671 / CCUG 45161 / LMG 19568 / NCTC 13146 / CH001A).